Reading from the N-terminus, the 474-residue chain is tRNA-2-methylthio-N(6)-dimethylallyladenosine synthase (474 aa).

Residues 3–120 (KKLHIKTWGC…LPEMINSVRG (118 aa)) enclose the MTTase N-terminal domain. The [4Fe-4S] cluster site is built by cysteine 12, cysteine 49, cysteine 83, cysteine 157, cysteine 161, and cysteine 164. Residues 143 to 378 (RADGPSAFVS…INQQVTAWSR (236 aa)) form the Radical SAM core domain. Residues 378–441 (RRMLGTTQRI…TNSMRGKVVR (64 aa)) enclose the TRAM domain.

The protein belongs to the methylthiotransferase family. MiaB subfamily. As to quaternary structure, monomer. It depends on [4Fe-4S] cluster as a cofactor.

It is found in the cytoplasm. The catalysed reaction is N(6)-dimethylallyladenosine(37) in tRNA + (sulfur carrier)-SH + AH2 + 2 S-adenosyl-L-methionine = 2-methylsulfanyl-N(6)-dimethylallyladenosine(37) in tRNA + (sulfur carrier)-H + 5'-deoxyadenosine + L-methionine + A + S-adenosyl-L-homocysteine + 2 H(+). Its function is as follows. Catalyzes the methylthiolation of N6-(dimethylallyl)adenosine (i(6)A), leading to the formation of 2-methylthio-N6-(dimethylallyl)adenosine (ms(2)i(6)A) at position 37 in tRNAs that read codons beginning with uridine. The protein is tRNA-2-methylthio-N(6)-dimethylallyladenosine synthase of Enterobacter sp. (strain 638).